A 135-amino-acid polypeptide reads, in one-letter code: Endocuticle structural glycoprotein SgAbd-2 (135 aa).

At Gln1 the chain carries Pyrrolidone carboxylic acid. Residues Thr11 and Thr100 are each glycosylated (O-linked (HexNAc...) threonine). The 71-residue stretch at 32 to 102 folds into the Chitin-binding type R&amp;R domain; sequence DGSYAYSYQT…AEGAHLPTPP (71 aa).

Its function is as follows. Component of the abdominal endocuticle. This is Endocuticle structural glycoprotein SgAbd-2 from Schistocerca gregaria (Desert locust).